The chain runs to 308 residues: Ribosomal RNA small subunit methyltransferase H (308 aa).

S-adenosyl-L-methionine is bound by residues 34-36 (GGH), Asp-54, Phe-85, Asp-99, and Gln-106.

The protein belongs to the methyltransferase superfamily. RsmH family.

Its subcellular location is the cytoplasm. The catalysed reaction is cytidine(1402) in 16S rRNA + S-adenosyl-L-methionine = N(4)-methylcytidine(1402) in 16S rRNA + S-adenosyl-L-homocysteine + H(+). In terms of biological role, specifically methylates the N4 position of cytidine in position 1402 (C1402) of 16S rRNA. The sequence is that of Ribosomal RNA small subunit methyltransferase H from Dichelobacter nodosus (strain VCS1703A).